Here is a 529-residue protein sequence, read N- to C-terminus: Aldehyde dehydrogenase 1 (529 aa).

251 to 256 (GSTYVG) is a binding site for NAD(+). Active-site residues include glutamate 273 and cysteine 307.

This sequence belongs to the aldehyde dehydrogenase family.

The catalysed reaction is an aldehyde + NAD(+) + H2O = a carboxylate + NADH + 2 H(+). The protein is Aldehyde dehydrogenase 1 of Entamoeba histolytica (strain ATCC 30459 / HM-1:IMSS / ABRM).